Here is a 475-residue protein sequence, read N- to C-terminus: Ankyrin repeat, SAM and basic leucine zipper domain-containing protein 1 (475 aa).

Positions 1-25 (MAAGPLRGLAVAGGGESSDSEDDGW) are disordered. 3 positions are modified to phosphoserine: serine 17, serine 18, and serine 20. ANK repeat units lie at residues 45 to 74 (ERQE…SVDT), 78 to 107 (YGWT…NASF), 110 to 144 (DKQT…DPNV), 148 to 177 (RLMT…EVNT), 181 to 210 (NGYT…NKMI), and 214 to 243 (DGKT…PLEG). Residues 272–334 (SYTAFGDLEI…KIMAALKELE (63 aa)) enclose the SAM domain.

As to quaternary structure, interacts with DDX4, PIWIL1, RANBP9 and TDRD1.

Its subcellular location is the cytoplasm. In terms of biological role, plays a central role during spermatogenesis by repressing transposable elements and preventing their mobilization, which is essential for the germline integrity. Acts via the piRNA metabolic process, which mediates the repression of transposable elements during meiosis by forming complexes composed of piRNAs and Piwi proteins and governs the methylation and subsequent repression of transposons. Its association with pi-bodies suggests a participation in the primary piRNAs metabolic process. Required prior to the pachytene stage to facilitate the production of multiple types of piRNAs, including those associated with repeats involved in the regulation of retrotransposons. May act by mediating protein-protein interactions during germ cell maturation. The sequence is that of Ankyrin repeat, SAM and basic leucine zipper domain-containing protein 1 (ASZ1) from Bos taurus (Bovine).